Reading from the N-terminus, the 197-residue chain is Imidazoleglycerol-phosphate dehydratase (197 aa).

It belongs to the imidazoleglycerol-phosphate dehydratase family.

It localises to the cytoplasm. The catalysed reaction is D-erythro-1-(imidazol-4-yl)glycerol 3-phosphate = 3-(imidazol-4-yl)-2-oxopropyl phosphate + H2O. The protein operates within amino-acid biosynthesis; L-histidine biosynthesis; L-histidine from 5-phospho-alpha-D-ribose 1-diphosphate: step 6/9. This is Imidazoleglycerol-phosphate dehydratase from Bradyrhizobium sp. (strain ORS 278).